The following is an 85-amino-acid chain: Putative defensin-like protein 258 (85 aa).

An N-terminal signal peptide occupies residues 1–25; it reads MINVSLKRSLLIFISVITSNIGSEA. 3 disulfides stabilise this stretch: cysteine 57-cysteine 75, cysteine 63-cysteine 82, and cysteine 67-cysteine 84.

The protein belongs to the DEFL family.

Its subcellular location is the secreted. In Arabidopsis thaliana (Mouse-ear cress), this protein is Putative defensin-like protein 258.